The following is a 1400-amino-acid chain: DNA-directed RNA polymerase subunit beta (1400 aa).

Belongs to the RNA polymerase beta chain family. As to quaternary structure, the RNAP catalytic core consists of 2 alpha, 1 beta, 1 beta' and 1 omega subunit. When a sigma factor is associated with the core the holoenzyme is formed, which can initiate transcription.

It carries out the reaction RNA(n) + a ribonucleoside 5'-triphosphate = RNA(n+1) + diphosphate. DNA-dependent RNA polymerase catalyzes the transcription of DNA into RNA using the four ribonucleoside triphosphates as substrates. The protein is DNA-directed RNA polymerase subunit beta of Acidiphilium cryptum (strain JF-5).